The chain runs to 128 residues: Keratin-associated protein 2-3 (128 aa).

Positions 5-112 are 10 X 5 AA repeats of C-C-[CDPQRWG]-[APRS]-[CIPSTVD]; sequence CCGSTLSSLS…SVQSPCCRPP (108 aa).

It belongs to the KRTAP type 2 family. In terms of assembly, interacts with hair keratins.

In the hair cortex, hair keratin intermediate filaments are embedded in an interfilamentous matrix, consisting of hair keratin-associated proteins (KRTAP), which are essential for the formation of a rigid and resistant hair shaft through their extensive disulfide bond cross-linking with abundant cysteine residues of hair keratins. The matrix proteins include the high-sulfur and high-glycine-tyrosine keratins. This Homo sapiens (Human) protein is Keratin-associated protein 2-3 (KRTAP2-3).